Reading from the N-terminus, the 1105-residue chain is Pheromone-regulated membrane protein 10 (1105 aa).

Over residues 1–11 (MSDNRPTYDTS) the composition is skewed to polar residues. Disordered regions lie at residues 1–22 (MSDN…NHFH), 36–55 (RKQN…TASN), 65–123 (GSNH…FYGD), 151–278 (IKPK…GGGL), 385–473 (AGAS…FLRG), and 520–656 (EQKS…LRHK). The segment covering 67–82 (NHKFGNSINNNNNNAN) has biased composition (low complexity). Polar residues predominate over residues 85 to 106 (LGSSSAGTNRRSLISPTSSTHV). The span at 162–178 (DSSDDDGNNLDEVEDET) shows a compositional bias: acidic residues. Positions 185 to 197 (LNQNHPPQQYYET) are enriched in polar residues. A compositionally biased stretch (acidic residues) spans 198–210 (DSSDEDEEDDDEV). The span at 390–413 (LDHSQQSSAAPSTEITPSQSPNQH) shows a compositional bias: polar residues. The span at 417-439 (EKSNNNENNQQSTTVESSSSTSS) shows a compositional bias: low complexity. The span at 446–459 (LARRRASEERKKAE) shows a compositional bias: basic and acidic residues. Polar residues-rich tracts occupy residues 520–539 (EQKS…GTAL), 592–606 (RTNT…NSEE), and 624–633 (MNANLPSFQN). 10 helical membrane-spanning segments follow: residues 782–802 (PPWL…PFAF), 809–829 (LPIS…VSSI), 835–855 (SVFE…IGSI), 860–880 (LFCF…GYII), 903–923 (VIYS…YGWI), 938–958 (AIDE…LGLI), 963–983 (WSQV…SFFA), 986–1006 (HFST…GVLG), 1015–1035 (GMAV…GIAS), and 1075–1095 (VEVS…IYPF).

The protein belongs to the ThrE exporter (TC 2.A.79) family.

The protein resides in the membrane. This is Pheromone-regulated membrane protein 10 (PRM10) from Candida albicans (strain SC5314 / ATCC MYA-2876) (Yeast).